A 171-amino-acid chain; its full sequence is ATP synthase subunit b 2 (171 aa).

The chain crosses the membrane as a helical span at residues 9–29 (APWHHPVFWVAVAFVLFFVLF).

This sequence belongs to the ATPase B chain family. F-type ATPases have 2 components, F(1) - the catalytic core - and F(0) - the membrane proton channel. F(1) has five subunits: alpha(3), beta(3), gamma(1), delta(1), epsilon(1). F(0) has three main subunits: a(1), b(2) and c(10-14). The alpha and beta chains form an alternating ring which encloses part of the gamma chain. F(1) is attached to F(0) by a central stalk formed by the gamma and epsilon chains, while a peripheral stalk is formed by the delta and b chains.

It localises to the cell inner membrane. Functionally, f(1)F(0) ATP synthase produces ATP from ADP in the presence of a proton or sodium gradient. F-type ATPases consist of two structural domains, F(1) containing the extramembraneous catalytic core and F(0) containing the membrane proton channel, linked together by a central stalk and a peripheral stalk. During catalysis, ATP synthesis in the catalytic domain of F(1) is coupled via a rotary mechanism of the central stalk subunits to proton translocation. Its function is as follows. Component of the F(0) channel, it forms part of the peripheral stalk, linking F(1) to F(0). The polypeptide is ATP synthase subunit b 2 (Granulibacter bethesdensis (strain ATCC BAA-1260 / CGDNIH1)).